A 473-amino-acid chain; its full sequence is Adenosylhomocysteinase (473 aa).

Residues Thr-64, Asp-139, and Glu-199 each contribute to the substrate site. 200–202 contributes to the NAD(+) binding site; it reads TTT. Lys-229 and Asp-233 together coordinate substrate. NAD(+) contacts are provided by residues Asn-234, 263–268, Glu-286, Asn-321, 342–344, and Asn-387; these read GYGDVG and IGH.

The protein belongs to the adenosylhomocysteinase family. The cofactor is NAD(+).

It localises to the cytoplasm. The catalysed reaction is S-adenosyl-L-homocysteine + H2O = L-homocysteine + adenosine. It functions in the pathway amino-acid biosynthesis; L-homocysteine biosynthesis; L-homocysteine from S-adenosyl-L-homocysteine: step 1/1. In terms of biological role, may play a key role in the regulation of the intracellular concentration of adenosylhomocysteine. The protein is Adenosylhomocysteinase of Paraburkholderia phytofirmans (strain DSM 17436 / LMG 22146 / PsJN) (Burkholderia phytofirmans).